A 35-amino-acid polypeptide reads, in one-letter code: KKWGWLAWVDPAYEFIKGFGKGAIKEGNKDKWKNI.

Bacteriocin activity requires interaction of alpha and beta peptides in a molar ratio of 7:1 or 8:1 respectively.

Its function is as follows. Kills Lactococci. The sequence is that of Bacteriocin lactococcin-G subunit beta from Lactococcus lactis subsp. lactis (Streptococcus lactis).